The following is a 241-amino-acid chain: Uridylate kinase (241 aa).

13 to 16 (KVSG) contributes to the ATP binding site. G55 lines the UMP pocket. ATP is bound by residues G56 and R60. UMP contacts are provided by residues D75 and 136 to 143 (TGNPFFTT). ATP is bound by residues T163, Q164, Y169, and D172.

This sequence belongs to the UMP kinase family. As to quaternary structure, homohexamer.

It localises to the cytoplasm. It catalyses the reaction UMP + ATP = UDP + ADP. It functions in the pathway pyrimidine metabolism; CTP biosynthesis via de novo pathway; UDP from UMP (UMPK route): step 1/1. Its activity is regulated as follows. Inhibited by UTP. Catalyzes the reversible phosphorylation of UMP to UDP. In Parvibaculum lavamentivorans (strain DS-1 / DSM 13023 / NCIMB 13966), this protein is Uridylate kinase.